We begin with the raw amino-acid sequence, 565 residues long: MPQASEHRLGRTREPPVNIQPRVGSKLPFAPRARSKERRNPASGPNPMLRPLPPRPGLPDERLKKLELGRGRTSGPRPRGPLRADHGVPLPGSPPPTVALPLPSRTNLARSKSVSSGDLRPMGIALGGHRGTGELGAALSRLALRPEPPTLRRSTSLRRLGGFPGPPTLFSIRTEPPASHGSFHMISARSSEPFYSDDKMAHHTLLLGSGHVGLRNLGNTCFLNAVLQCLSSTRPLRDFCLRRDFRQEVPGGGRAQELTEAFADVIGALWHPDSCEAVNPTRFRAVFQKYVPSFSGYSQQDAQEFLKLLMERLHLEINRRGRRAPPILANGPVPSPPRRGGALLEEPELSDDDRANLMWKRYLEREDSKIVDLFVGQLKSCLKCQACGYRSTTFEVFCDLSLPIPKKGFAGGKVSLRDCFNLFTKEEELESENAPVCDRCRQKTRSTKKLTVQRFPRILVLHLNRFSASRGSIKKSSVGVDFPLQRLSLGDFASDKAGSPVYQLYALCNHSGSVHYGHYTALCRCQTGWHVYNDSRVSPVSENQVASSEGYVLFYQLMQEPPRCL.

Residues 1-14 (MPQASEHRLGRTRE) are compositionally biased toward basic and acidic residues. A disordered region spans residues 1-103 (MPQASEHRLG…PPPTVALPLP (103 aa)). Pro residues predominate over residues 48 to 57 (MLRPLPPRPG). The span at 58–70 (LPDERLKKLELGR) shows a compositional bias: basic and acidic residues. A Nuclear export signal motif is present at residues 134-152 (ELGAALSRLALRPEPPTLR). Residues 212–558 (VGLRNLGNTC…EGYVLFYQLM (347 aa)) enclose the USP domain. C221 functions as the Nucleophile in the catalytic mechanism. 4 residues coordinate Zn(2+): C384, C387, C437, and C440. The active-site Proton acceptor is H518.

This sequence belongs to the peptidase C19 family. USP21 subfamily. In terms of assembly, interacts with BEND3. Highly expressed in heart, pancreas and skeletal muscle. Also expressed in brain, placenta, liver and kidney, and at very low level in lung.

Its subcellular location is the cytoplasm. The protein resides in the nucleus. It carries out the reaction Thiol-dependent hydrolysis of ester, thioester, amide, peptide and isopeptide bonds formed by the C-terminal Gly of ubiquitin (a 76-residue protein attached to proteins as an intracellular targeting signal).. In terms of biological role, deubiquitinates histone H2A, a specific tag for epigenetic transcriptional repression, thereby acting as a coactivator. Deubiquitination of histone H2A releaves the repression of di- and trimethylation of histone H3 at 'Lys-4', resulting in regulation of transcriptional initiation. Regulates gene expression via histone H2A deubiquitination. Deubiquitinates BAZ2A/TIP5 leading to its stabilization. Also capable of removing NEDD8 from NEDD8 conjugates but has no effect on Sentrin-1 conjugates. Also acts as a negative regulator of the ribosome quality control (RQC) by mediating deubiquitination of 40S ribosomal proteins RPS10/eS10 and RPS20/uS10, thereby antagonizing ZNF598-mediated 40S ubiquitination. The sequence is that of Ubiquitin carboxyl-terminal hydrolase 21 from Homo sapiens (Human).